The sequence spans 904 residues: Phosphoenolpyruvate carboxylase (904 aa).

Catalysis depends on residues H151 and K570.

Belongs to the PEPCase type 1 family. Requires Mg(2+) as cofactor.

It carries out the reaction oxaloacetate + phosphate = phosphoenolpyruvate + hydrogencarbonate. Its function is as follows. Forms oxaloacetate, a four-carbon dicarboxylic acid source for the tricarboxylic acid cycle. In Xanthomonas campestris pv. campestris (strain 8004), this protein is Phosphoenolpyruvate carboxylase.